A 245-amino-acid chain; its full sequence is Ribonuclease 3 (245 aa).

In terms of domain architecture, RNase III spans 19 to 148 (FKVFQEKIGI…FIGALYLDQG (130 aa)). E61 lines the Mg(2+) pocket. Residue D65 is part of the active site. Residues D134 and E137 each coordinate Mg(2+). E137 is an active-site residue. Residues 174–243 (DYKSQLQELI…AAEALKKLKE (70 aa)) enclose the DRBM domain.

Belongs to the ribonuclease III family. As to quaternary structure, homodimer. The cofactor is Mg(2+).

It localises to the cytoplasm. The catalysed reaction is Endonucleolytic cleavage to 5'-phosphomonoester.. In terms of biological role, digests double-stranded RNA. Involved in the processing of primary rRNA transcript to yield the immediate precursors to the large and small rRNAs (23S and 16S). Processes some mRNAs, and tRNAs when they are encoded in the rRNA operon. Processes pre-crRNA and tracrRNA of type II CRISPR loci if present in the organism. The protein is Ribonuclease 3 of Bacillus cereus (strain ATCC 14579 / DSM 31 / CCUG 7414 / JCM 2152 / NBRC 15305 / NCIMB 9373 / NCTC 2599 / NRRL B-3711).